Reading from the N-terminus, the 350-residue chain is Selenide, water dikinase (350 aa).

Residue Cys-17 is part of the active site. ATP contacts are provided by residues Lys-20 and 48 to 50 (LFD). Asp-51 is a Mg(2+) binding site. ATP-binding positions include Asp-68, Asp-91, and 139 to 141 (GHS). Position 91 (Asp-91) interacts with Mg(2+). Asp-229 is a binding site for Mg(2+).

The protein belongs to the selenophosphate synthase 1 family. Class I subfamily. As to quaternary structure, homodimer. The cofactor is Mg(2+).

It catalyses the reaction hydrogenselenide + ATP + H2O = selenophosphate + AMP + phosphate + 2 H(+). Synthesizes selenophosphate from selenide and ATP. The protein is Selenide, water dikinase of Bdellovibrio bacteriovorus (strain ATCC 15356 / DSM 50701 / NCIMB 9529 / HD100).